The chain runs to 208 residues: Ribonuclease HII (208 aa).

Residues 1 to 205 (MIVVGIDEAG…LQEIAPNYYI (205 aa)) enclose the RNase H type-2 domain. Positions 7, 8, and 104 each coordinate a divalent metal cation.

It belongs to the RNase HII family. Mn(2+) serves as cofactor. The cofactor is Mg(2+).

It localises to the cytoplasm. It carries out the reaction Endonucleolytic cleavage to 5'-phosphomonoester.. Endonuclease that specifically degrades the RNA of RNA-DNA hybrids. This Sulfurisphaera tokodaii (strain DSM 16993 / JCM 10545 / NBRC 100140 / 7) (Sulfolobus tokodaii) protein is Ribonuclease HII.